A 509-amino-acid polypeptide reads, in one-letter code: Dihydrolipoyl dehydrogenase, mitochondrial (509 aa).

The transit peptide at M1 to Y35 directs the protein to the mitochondrion. K66 is subject to N6-acetyllysine; alternate. Residue K66 is modified to N6-succinyllysine; alternate. FAD-binding positions include E71 to C80 and K89. C80 and C85 form a disulfide bridge. Residues K122, K132, and K143 each carry the N6-acetyllysine; alternate modification. An N6-succinyllysine; alternate mark is found at K122, K132, and K143. G154 lines the FAD pocket. N6-succinyllysine is present on residues K159 and K166. T183 to S185 is an FAD binding site. NAD(+) contacts are provided by residues G220–E227 and E243. An N6-succinyllysine mark is found at K273 and K277. NAD(+) is bound at residue V278. S285 and S297 each carry phosphoserine. G314 lines the NAD(+) pocket. Residue K346 is modified to N6-acetyllysine. FAD-binding positions include D355 and M361 to H364. K410 bears the N6-acetyllysine; alternate mark. K410 carries the post-translational modification N6-succinyllysine; alternate. N6-acetyllysine occurs at positions 417 and 420. An N6-succinyllysine modification is found at K430. Residue H487 is the Proton acceptor of the active site. Residue S502 is modified to Phosphoserine. An N6-acetyllysine; alternate modification is found at K505. K505 is modified (N6-succinyllysine; alternate).

This sequence belongs to the class-I pyridine nucleotide-disulfide oxidoreductase family. As to quaternary structure, homodimer. Part of the multimeric pyruvate dehydrogenase complex that contains multiple copies of pyruvate dehydrogenase (subunits PDHA (PDHA1 or PDHA2) and PDHB, E1), dihydrolipoamide acetyltransferase (DLAT, E2) and lipoamide dehydrogenase (DLD, E3). These subunits are bound to an inner core composed of about 48 DLAT and 12 PDHX molecules (by non covalent bonds). The 2-oxoglutarate dehydrogenase complex is composed of OGDH (2-oxoglutarate dehydrogenase; E1), DLST (dihydrolipoamide succinyltransferase; E2), DLD (dihydrolipoamide dehydrogenase; E3) and the assembly factor KGD4. It contains multiple copies of the three enzymatic components (E1, E2 and E3). In the nucleus, the 2-oxoglutarate dehydrogenase complex associates with KAT2A. Interacts with PDHX. Requires FAD as cofactor. Tyrosine phosphorylated.

It localises to the mitochondrion matrix. Its subcellular location is the nucleus. The protein resides in the cell projection. The protein localises to the cilium. It is found in the flagellum. It localises to the cytoplasmic vesicle. Its subcellular location is the secretory vesicle. The protein resides in the acrosome. The enzyme catalyses N(6)-[(R)-dihydrolipoyl]-L-lysyl-[protein] + NAD(+) = N(6)-[(R)-lipoyl]-L-lysyl-[protein] + NADH + H(+). In terms of biological role, lipoamide dehydrogenase is a component of the glycine cleavage system as well as an E3 component of three alpha-ketoacid dehydrogenase complexes (pyruvate-, alpha-ketoglutarate-, and branched-chain amino acid-dehydrogenase complex). The 2-oxoglutarate dehydrogenase complex is mainly active in the mitochondrion. A fraction of the 2-oxoglutarate dehydrogenase complex also localizes in the nucleus and is required for lysine succinylation of histones: associates with KAT2A on chromatin and provides succinyl-CoA to histone succinyltransferase KAT2A. In monomeric form may have additional moonlighting function as serine protease. Involved in the hyperactivation of spermatazoa during capacitation and in the spermatazoal acrosome reaction. This chain is Dihydrolipoyl dehydrogenase, mitochondrial (DLD), found in Cricetulus griseus (Chinese hamster).